The primary structure comprises 77 residues: Phytosulfokines 5 (77 aa).

The signal sequence occupies residues 1–24 (MVKFTTFLCIIALLLCSTLTHASA). A propeptide spanning residues 25–68 (RLNPTSVYPEENSFKKLEQGEVICEGVGEEECFLIRRTLVAHTD) is cleaved from the precursor. Residues Y69 and Y71 each carry the sulfotyrosine modification. Residues 74–77 (NHNP) constitute a propeptide that is removed on maturation.

Belongs to the phytosulfokine family. Post-translationally, sulfation is important for activity and for the binding to a putative membrane receptor. PSK-beta is an enzymatic derivative of PSK-alpha. In terms of tissue distribution, expressed in stems, roots, mature leaves and flowers. Most abundant in vascular bundles.

It is found in the secreted. Its function is as follows. Promotes plant cell differentiation, organogenesis and somatic embryogenesis as well as cell proliferation. May be involved in the low quiescent center cell proliferation. In Arabidopsis thaliana (Mouse-ear cress), this protein is Phytosulfokines 5 (PSK5).